The chain runs to 63 residues: Large ribosomal subunit protein uL29 (63 aa).

This sequence belongs to the universal ribosomal protein uL29 family.

The protein is Large ribosomal subunit protein uL29 of Escherichia coli O8 (strain IAI1).